The chain runs to 374 residues: Speckle-type POZ protein (374 aa).

Residues 31-161 (KFSYMWTINN…DDKLTLFCEV (131 aa)) form the MATH domain. Residues 71 to 191 (VNPKGLDEES…PECRLADELG (121 aa)) are required for nuclear localization. The tract at residues 123–133 (YRFVQGKDWGF) is important for binding substrate proteins. The region spanning 173 to 297 (QNTMNMVKVP…MCEDALCSNL (125 aa)) is the BTB domain. Important for homodimerization regions lie at residues 186–217 (LADE…HKAI) and 297–355 (LSVE…AYRS).

Belongs to the Tdpoz family. As to quaternary structure, interacts with GLI2 and GLI3. Homodimer and homooligomer. Heterodimer with SPOPL. Each dimer interacts with two CUL3 molecules. Part of cullin-RING-based BCR (BTB-CUL3-RBX1) E3 ubiquitin-protein ligase complexes that contain CUL3 and homodimeric SPOP, or the heterodimer formed by SPOP and SPOPL, plus a target protein, such as MACROH2A1, PDX1/IPF1, BMI1, BRMS1 and DAXX. Interacts with IRF1; this interaction mediates IRF1 proteasomal degradation. Interacts with HNF1A.

Its subcellular location is the nucleus. It is found in the nucleus speckle. Its pathway is protein modification; protein ubiquitination. Functionally, component of a cullin-RING-based BCR (BTB-CUL3-RBX1) E3 ubiquitin-protein ligase complex that mediates the ubiquitination of target proteins, leading most often to their proteasomal degradation. In complex with CUL3, involved in ubiquitination and proteasomal degradation of BRMS1, DAXX, PDX1/IPF1, GLI2 and GLI3. In complex with CUL3, involved in ubiquitination of MACROH2A1 and BMI1; this does not lead to their proteasomal degradation. Inhibits transcriptional activation of PDX1/IPF1 targets, such as insulin, by promoting PDX1/IPF1 degradation. The cullin-RING-based BCR (BTB-CUL3-RBX1) E3 ubiquitin-protein ligase complex containing homodimeric SPOP has higher ubiquitin ligase activity than the complex that contains the heterodimer formed by SPOP and SPOPL. Involved in the regulation of bromodomain and extra-terminal motif (BET) proteins BRD2, BRD3, BRD4 stability.Plays an essential role for proper translation, but not for their degradation, of critical DNA replication licensing factors CDT1 and CDC6, thereby participating in DNA synthesis and cell proliferation. Regulates interferon regulatory factor 1/IRF1 proteasomal turnover by targeting S/T-rich degrons in IRF1. Involved in ubiquitination of BRDT and promotes its degradation, thereby regulates histone removal in early condensing spermatids prior to histone-to-protamine exchange. This is Speckle-type POZ protein (SPOP) from Bos taurus (Bovine).